An 83-amino-acid chain; its full sequence is Cytochrome b559 subunit alpha (83 aa).

A helical membrane pass occupies residues V21–W35. A heme-binding site is contributed by H23.

Belongs to the PsbE/PsbF family. As to quaternary structure, heterodimer of an alpha subunit and a beta subunit. PSII is composed of 1 copy each of membrane proteins PsbA, PsbB, PsbC, PsbD, PsbE, PsbF, PsbH, PsbI, PsbJ, PsbK, PsbL, PsbM, PsbT, PsbX, PsbY, PsbZ, Psb30/Ycf12, at least 3 peripheral proteins of the oxygen-evolving complex and a large number of cofactors. It forms dimeric complexes. The cofactor is heme b.

It is found in the plastid. The protein resides in the chloroplast thylakoid membrane. Functionally, this b-type cytochrome is tightly associated with the reaction center of photosystem II (PSII). PSII is a light-driven water:plastoquinone oxidoreductase that uses light energy to abstract electrons from H(2)O, generating O(2) and a proton gradient subsequently used for ATP formation. It consists of a core antenna complex that captures photons, and an electron transfer chain that converts photonic excitation into a charge separation. This is Cytochrome b559 subunit alpha from Liriodendron tulipifera (Tuliptree).